An 825-amino-acid polypeptide reads, in one-letter code: Breast cancer anti-estrogen resistance protein 3 homolog (825 aa).

Alanine 2 carries the post-translational modification N-acetylalanine. Residues serine 32, serine 78, serine 83, serine 182, and serine 290 each carry the phosphoserine modification. The disordered stretch occupies residues glutamate 40–proline 84. The region spanning tryptophan 154 to isoleucine 253 is the SH2 domain. The interval aspartate 300–alanine 320 is disordered. Position 334 is an N6-methyllysine (lysine 334). Residues serine 358, serine 363, and serine 375 each carry the phosphoserine modification. Arginine 442 carries the omega-N-methylarginine modification. Position 471 is a phosphoserine (serine 471). Residues aspartate 548–proline 818 form the Ras-GEF domain. Positions leucine 744–arginine 748 are mediates the interaction with BCAR1/p130CAS.

As to quaternary structure, part of a complex comprised of PTPRA, BCAR1, BCAR3 and SRC; the formation of the complex is dependent on integrin mediated-tyrosine phosphorylation of PTPRA. Within the complex, interacts (via SH2 domain) with PTPRA (when phosphorylated on 'Tyr-792'). Interacts (via Ras-GEF domain) with BCAR1. Interacts (via Ras-GEF domain) with NEDD9. Interacts with PTK2/FAK1. Interacts with PTPN1. Interacts (via SH2 domain) with EGFR (when tyrosine-phosphorylated). Post-translationally, phosphorylated on tyrosine residues.

The protein localises to the cytoplasm. Its subcellular location is the cell junction. It is found in the focal adhesion. Functionally, acts as an adapter protein downstream of several growth factor receptors to promote cell proliferation, migration, and redistribution of actin fibers. Specifically involved in INS/insulin signaling pathway by mediating MAPK1/ERK2-MAPK3/ERK1 activation and DNA synthesis. Promotes insulin-mediated membrane ruffling. In response to vasoconstrictor peptide EDN1, involved in the activation of RAP1 downstream of PTK2B via interaction with phosphorylated BCAR1. Inhibits cell migration and invasion via regulation of TGFB-mediated matrix digestion, actin filament rearrangement, and inhibition of invadopodia activity. May inhibit TGFB/SMAD signaling, via facilitating BCAR1 and SMAD2 and/or SMAD3 interaction. Regulates EGF-induced DNA synthesis. Required for the maintenance of ocular lens morphology and structural integrity, potentially via regulation of focal adhesion complex signaling. Acts upstream of PTPRA to regulate the localization of BCAR1 and PTPRA to focal adhesions, via regulation of SRC-mediated phosphorylation of PTPRA. Positively regulates integrin-induced tyrosine phosphorylation of BCAR1. Acts as a guanine nucleotide exchange factor (GEF) for small GTPases RALA, RAP1A and RRAS. However, in a contrasting study, lacks GEF activity towards RAP1. The polypeptide is Breast cancer anti-estrogen resistance protein 3 homolog (Rattus norvegicus (Rat)).